The primary structure comprises 259 residues: MSTEKTKILEVKNLKAQVDGTEILKGVNLTINSGEIHAIMGPNGSGKSTFSKILAGHPAYQVTGGEILFKNKNLLELEPEERARAGVFLAFQYPIEIAGVSNIDFLRLAYNNRRKEEGLTELDPLTFYSIVKEKLNVVKMDPHFLNRNVNEGFSGGEKKRNEILQMALLNPSLAILDETDSGLDIDALRIVAEGVNQLSNKENSIILITHYQRLLDYIVPDYIHVMQNGRILKTGGAELAKELEIKGYDWLNELEMVKK.

An ABC transporter domain is found at 9 to 253 (LEVKNLKAQV…EIKGYDWLNE (245 aa)). 41 to 48 (GPNGSGKS) is an ATP binding site.

The protein belongs to the ABC transporter superfamily. Ycf16 family.

It is found in the plastid. Its subcellular location is the cyanelle. This is Probable ATP-dependent transporter ycf16 (ycf16) from Cyanophora paradoxa.